The following is a 313-amino-acid chain: Dihydroorotate dehydrogenase B (NAD(+)), catalytic subunit (313 aa).

FMN-binding positions include Ser-21 and 45 to 46; that span reads KA. Substrate is bound by residues Lys-45 and 69 to 73; that span reads NAIGL. Positions 99 and 127 each coordinate FMN. Asn-127 is a binding site for substrate. Cys-130 (nucleophile) is an active-site residue. FMN-binding residues include Lys-165 and Ile-191. 192–193 contributes to the substrate binding site; it reads NT. FMN-binding positions include Gly-217, 243 to 244, and 265 to 266; these read GG and GT.

It belongs to the dihydroorotate dehydrogenase family. Type 1 subfamily. Heterotetramer of 2 PyrK and 2 PyrD type B subunits. FMN is required as a cofactor.

Its subcellular location is the cytoplasm. The enzyme catalyses (S)-dihydroorotate + NAD(+) = orotate + NADH + H(+). The protein operates within pyrimidine metabolism; UMP biosynthesis via de novo pathway; orotate from (S)-dihydroorotate (NAD(+) route): step 1/1. Its function is as follows. Catalyzes the conversion of dihydroorotate to orotate with NAD(+) as electron acceptor. The protein is Dihydroorotate dehydrogenase B (NAD(+)), catalytic subunit (pyrD) of Geobacillus kaustophilus (strain HTA426).